Here is a 1323-residue protein sequence, read N- to C-terminus: ABC transporter C family member 12 (1323 aa).

One can recognise an ABC transmembrane type-1 1 domain in the interval H110 to Q396. 6 consecutive transmembrane segments (helical) span residues C111–L131, M152–Y172, V227–L247, I252–L272, I338–Y358, and S375–I395. The 225-residue stretch at V428–E652 folds into the ABC transporter 1 domain. G464–S471 lines the ATP pocket. Residues E657 to E695 are disordered. A compositionally biased stretch (basic and acidic residues) spans D672–G690. The next 5 membrane-spanning stretches (helical) occupy residues V712–G732, I772–F792, L840–I860, I862–I882, and W952–I972. An ABC transmembrane type-1 2 domain is found at F720–T1010. In terms of domain architecture, ABC transporter 2 spans I1047–N1281. G1081–S1088 lines the ATP pocket.

It belongs to the ABC transporter superfamily. ABCC family. Conjugate transporter (TC 3.A.1.208) subfamily.

The protein resides in the membrane. The chain is ABC transporter C family member 12 (abcC12) from Dictyostelium discoideum (Social amoeba).